The chain runs to 21 residues: Brevinin-2-related peptide (21 aa).

L21 bears the Leucine amide mark.

Expressed by the skin glands.

The protein resides in the secreted. Functionally, antimicrobial peptide with activity against Gram-negative and Gram-positive bacteria (MIC=13 uM against E.coli, MIC=25 uM against S.aureus) and fungi (MIC=25 uM against C.albicans). Also shows hemolytic activity (HC(50)=50 uM). In vitro, shows moderate inhibitory activity against HIV. The polypeptide is Brevinin-2-related peptide (Lithobates septentrionalis (Mink frog)).